Consider the following 522-residue polypeptide: Transactivator/viroplasmin protein (522 aa).

The interval 488 to 522 is disordered; it reads DASADEGTTDKSGPPPTRSIVEKEDVPNTSSKQVD.

It belongs to the caulimoviridae viroplasmin family.

It is found in the host cytoplasm. Enhances the ribosomal termination-reinitiation event leading to the translation of major open reading frames on the polycistronic viral RNAs. The chain is Transactivator/viroplasmin protein from Cauliflower mosaic virus (strain D/H) (CaMV).